We begin with the raw amino-acid sequence, 369 residues long: GDSL esterase/lipase At5g42170 (369 aa).

Positions 1–16 are cleaved as a signal peptide; that stretch reads MSRLVYVIFLLVVVEG. N-linked (GlcNAc...) asparagine glycosylation is found at Asn28 and Asn45. The Nucleophile role is filled by Ser57. Asn203 and Asn336 each carry an N-linked (GlcNAc...) asparagine glycan. Residues Asp344 and His347 contribute to the active site.

This sequence belongs to the 'GDSL' lipolytic enzyme family.

Its subcellular location is the secreted. In Arabidopsis thaliana (Mouse-ear cress), this protein is GDSL esterase/lipase At5g42170.